The sequence spans 175 residues: Adenine phosphoribosyltransferase (175 aa).

Belongs to the purine/pyrimidine phosphoribosyltransferase family. Homodimer.

It localises to the cytoplasm. It carries out the reaction AMP + diphosphate = 5-phospho-alpha-D-ribose 1-diphosphate + adenine. The protein operates within purine metabolism; AMP biosynthesis via salvage pathway; AMP from adenine: step 1/1. Functionally, catalyzes a salvage reaction resulting in the formation of AMP, that is energically less costly than de novo synthesis. The sequence is that of Adenine phosphoribosyltransferase from Lactobacillus johnsonii (strain CNCM I-12250 / La1 / NCC 533).